The sequence spans 74 residues: uncharacterized protein (74 aa).

2 consecutive transmembrane segments (helical) span residues 3-23 (YSAL…CFSF) and 35-55 (ILFF…MLLT).

It is found in the cell membrane. This is an uncharacterized protein from Mycoplasma genitalium (strain ATCC 33530 / DSM 19775 / NCTC 10195 / G37) (Mycoplasmoides genitalium).